A 454-amino-acid chain; its full sequence is Replicative DNA helicase DnaC (454 aa).

The SF4 helicase domain maps to 179–445 (RKGDITGIPT…NKFVNLERRF (267 aa)). 210 to 217 (ARPSVGKT) lines the ATP pocket.

This sequence belongs to the helicase family. DnaB subfamily. In terms of assembly, the DNA replisome assembles sequentially on oriC in this order; DnaA, DnaD, DnaB, DnaI-DnaC helicase. Monomer in the absence of ATP, in its presence forms a probable homohexamer which is not active as a helicase in vitro. Interacts separately and simultaneously with helicase loaders DnaB and DnaI. Interaction with DnaB does not require ATP. Interaction with DnaI requires ATP, probably forms a DnaC(6):DnaI(6) complex, which is not active as a helicase.

The protein resides in the cytoplasm. The protein localises to the nucleoid. It carries out the reaction Couples ATP hydrolysis with the unwinding of duplex DNA at the replication fork by translocating in the 5'-3' direction. This creates two antiparallel DNA single strands (ssDNA). The leading ssDNA polymer is the template for DNA polymerase III holoenzyme which synthesizes a continuous strand.. The enzyme catalyses ATP + H2O = ADP + phosphate + H(+). Functionally, the main replicative DNA helicase, it participates in initiation and elongation during chromosome replication. Travels ahead of the DNA replisome, separating dsDNA into templates for DNA synthesis. The monomer has helicase activity in the presence of DnaI which is further increased by DnaB; the purified oligomeric form (probably a DnaC hexamer) does not have helicase activity in vitro, nor does the DnaC(6):DnaI(6) complex. The direction was not determined but is probably 5'-3'. Helicase activity requires an rNTP and is inactive with dNTPs. Has weak ATPase activity as a monomer, as an oligomer has ATPase activity which is stimulated by single-stranded (ss)DNA and further stimulated by DnaI and more by DnaB. In terms of biological role, deletion of a single T residue in the promoter region (a run of 8 Ts becomes 7 Ts) decreases the helicase levels by 50%, decreasing DNA replication inititation during fast growth in rich medium. Suppresses the synthetic lethality of a dnaA1-yabA deletion for growth on rich medium. The polypeptide is Replicative DNA helicase DnaC (Bacillus subtilis (strain 168)).